The following is a 463-amino-acid chain: L-seryl-tRNA(Sec) selenium transferase (463 aa).

The residue at position 295 (Lys-295) is an N6-(pyridoxal phosphate)lysine.

The protein belongs to the SelA family. In terms of assembly, homodecamer; pentamer of dimers. Binds only one seryl-tRNA(Sec) per dimer. The cofactor is pyridoxal 5'-phosphate.

Its subcellular location is the cytoplasm. The enzyme catalyses L-seryl-tRNA(Sec) + selenophosphate + H(+) = L-selenocysteinyl-tRNA(Sec) + phosphate. The protein operates within aminoacyl-tRNA biosynthesis; selenocysteinyl-tRNA(Sec) biosynthesis; selenocysteinyl-tRNA(Sec) from L-seryl-tRNA(Sec) (bacterial route): step 1/1. Converts seryl-tRNA(Sec) to selenocysteinyl-tRNA(Sec) required for selenoprotein biosynthesis. The polypeptide is L-seryl-tRNA(Sec) selenium transferase (Salmonella paratyphi B (strain ATCC BAA-1250 / SPB7)).